Consider the following 148-residue polypeptide: Dermatopontin (148 aa).

A disulfide bridge links cysteine 14 with cysteine 40. Asparagine 44 carries an N-linked (GlcNAc...) asparagine glycan. Intrachain disulfides connect cysteine 66-cysteine 93 and cysteine 103-cysteine 147.

This sequence belongs to the dermatopontin family. In terms of processing, the terminal mannose residues of the polysaccharide are 3-O-methylated. No tyrosine sulfation was detected.

It is found in the secreted. The protein localises to the extracellular space. Its subcellular location is the extracellular matrix. Functionally, seems to mediate adhesion by cell surface integrin binding. The protein is Dermatopontin of Biomphalaria glabrata (Bloodfluke planorb).